Here is a 157-residue protein sequence, read N- to C-terminus: Nascent polypeptide-associated complex subunit beta-1 (157 aa).

2 disordered regions span residues K19–T42 and E126–E157. Positions N38–F103 constitute an NAC-A/B domain. A compositionally biased stretch (basic and acidic residues) spans E126–A142. Residue T151 is modified to Phosphothreonine.

The protein belongs to the NAC-beta family. As to quaternary structure, part of the nascent polypeptide-associated complex (NAC), consisting of EGD2 and either EGD1 or BTT1. NAC associates with ribosomes via EGD1 or BTT1, and with the CCR4-NOT complex.

Its subcellular location is the cytoplasm. It is found in the nucleus. Component of the nascent polypeptide-associated complex (NAC), a dynamic component of the ribosomal exit tunnel, protecting the emerging polypeptides from interaction with other cytoplasmic proteins to ensure appropriate nascent protein targeting. The NAC complex also promotes mitochondrial protein import by enhancing productive ribosome interactions with the outer mitochondrial membrane and blocks the inappropriate interaction of ribosomes translating non-secretory nascent polypeptides with translocation sites in the membrane of the endoplasmic reticulum. EGD1 may act as a transcription factor that exert a negative effect on the expression of several genes that are transcribed by RNA polymerase II. In Saccharomyces cerevisiae (strain YJM789) (Baker's yeast), this protein is Nascent polypeptide-associated complex subunit beta-1 (EGD1).